A 998-amino-acid chain; its full sequence is Protein Smaug (998 aa).

Polar residues predominate over residues 1–37 (MKYATGTDNAMTSGISGQTNNSNSASNEMQPTTSTPT). Disordered regions lie at residues 1–45 (MKYA…EATS), 50–69 (TATYANGNPNPSANPSQSQP), and 329–370 (LCPA…GSSS). Over residues 329 to 338 (LCPASGSRSS) the composition is skewed to low complexity. A phosphoserine mark is found at Ser564 and Ser575. The interaction with cup stretch occupies residues 583 to 763 (EFKPNYIKFH…KDLKFKLSKM (181 aa)). Residues 600-654 (GIGLWLKSLRLHKYIELFKNMTYEEMLLITEDFLQSVGVTKGASHKLALCIDKLK) enclose the SAM domain. 2 disordered regions span residues 773 to 892 (HVKP…MQQM) and 942 to 977 (NNGSNDNLGLERNQQPQQQQQRKLSGGVSSAEQQPK). Composition is skewed to polar residues over residues 801–822 (KSGSNDRINNRKNSNDMLNFSL) and 854–864 (HQPQYKSSSYP). At Ser971 the chain carries Phosphoserine.

This sequence belongs to the SMAUG family. Interacts with oskar (osk). Binds to the 3'-UTR of nos. Interacts with cup, which in turn recruits eIF4-E, leading to an indirect interaction between smg and eIF4-E that prevents mRNA translation.

It is found in the cytoplasm. Translation regulator that binds to the 3'-UTR of specific mRNAs such as nanos (nos) and prevent their translation. Prevents translation of unlocalized nos in the bulk cytoplasm via the recruitment of cup. The protein is Protein Smaug of Drosophila simulans (Fruit fly).